A 402-amino-acid polypeptide reads, in one-letter code: 2,3-bisphosphoglycerate-independent phosphoglycerate mutase (402 aa).

Residues 155 to 174 (SMVSDSDPHRENERPMEVRP) are disordered. Basic and acidic residues predominate over residues 160–174 (SDPHRENERPMEVRP).

It belongs to the BPG-independent phosphoglycerate mutase family. A-PGAM subfamily.

It catalyses the reaction (2R)-2-phosphoglycerate = (2R)-3-phosphoglycerate. Its pathway is carbohydrate degradation; glycolysis; pyruvate from D-glyceraldehyde 3-phosphate: step 3/5. Its function is as follows. Catalyzes the interconversion of 2-phosphoglycerate and 3-phosphoglycerate. The protein is 2,3-bisphosphoglycerate-independent phosphoglycerate mutase of Picrophilus torridus (strain ATCC 700027 / DSM 9790 / JCM 10055 / NBRC 100828 / KAW 2/3).